A 95-amino-acid polypeptide reads, in one-letter code: Aspartyl/glutamyl-tRNA(Asn/Gln) amidotransferase subunit C (95 aa).

It belongs to the GatC family. As to quaternary structure, heterotrimer of A, B and C subunits.

The enzyme catalyses L-glutamyl-tRNA(Gln) + L-glutamine + ATP + H2O = L-glutaminyl-tRNA(Gln) + L-glutamate + ADP + phosphate + H(+). The catalysed reaction is L-aspartyl-tRNA(Asn) + L-glutamine + ATP + H2O = L-asparaginyl-tRNA(Asn) + L-glutamate + ADP + phosphate + 2 H(+). Allows the formation of correctly charged Asn-tRNA(Asn) or Gln-tRNA(Gln) through the transamidation of misacylated Asp-tRNA(Asn) or Glu-tRNA(Gln) in organisms which lack either or both of asparaginyl-tRNA or glutaminyl-tRNA synthetases. The reaction takes place in the presence of glutamine and ATP through an activated phospho-Asp-tRNA(Asn) or phospho-Glu-tRNA(Gln). The polypeptide is Aspartyl/glutamyl-tRNA(Asn/Gln) amidotransferase subunit C (Rhizobium etli (strain ATCC 51251 / DSM 11541 / JCM 21823 / NBRC 15573 / CFN 42)).